Reading from the N-terminus, the 290-residue chain is Phosphoribulokinase 1 (290 aa).

12–20 (GSSGAGTST) is a binding site for ATP.

This sequence belongs to the phosphoribulokinase family. Homooctamer.

It carries out the reaction D-ribulose 5-phosphate + ATP = D-ribulose 1,5-bisphosphate + ADP + H(+). It functions in the pathway carbohydrate biosynthesis; Calvin cycle. With respect to regulation, activated by NADH and inhibited by phosphoenolpyruvate. This is Phosphoribulokinase 1 (prkA) from Cereibacter sphaeroides (Rhodobacter sphaeroides).